Reading from the N-terminus, the 71-residue chain is Large ribosomal subunit protein uL29 (71 aa).

This sequence belongs to the universal ribosomal protein uL29 family.

The chain is Large ribosomal subunit protein uL29 from Roseiflexus sp. (strain RS-1).